The primary structure comprises 285 residues: Protease HtpX homolog (285 aa).

The next 2 helical transmembrane spans lie at 7 to 27 (TAML…MIGG) and 30 to 50 (GMTI…WFSD). Zn(2+) is bound at residue His131. Residue Glu132 is part of the active site. His135 provides a ligand contact to Zn(2+). Helical transmembrane passes span 146–166 (ITAT…FFGG) and 177–197 (IAGI…QMAI). Glu202 serves as a coordination point for Zn(2+).

Belongs to the peptidase M48B family. Requires Zn(2+) as cofactor.

The protein resides in the cell inner membrane. The protein is Protease HtpX homolog of Burkholderia lata (strain ATCC 17760 / DSM 23089 / LMG 22485 / NCIMB 9086 / R18194 / 383).